We begin with the raw amino-acid sequence, 211 residues long: MLTAIRKNGLTLAIFACATTGLVALTQYLTEDQIKLQEQKQLLSVLNQVIPETMHDNALTQSCTLVTSPELGTMHAMPTYIATKNGEPTAIAIESIAPDGYNGEIKVITGIDNQGKILGTRVLSHQETPGLGDKIDLRVTSWILGFTGKQVTEDNWNSWKVRKDGGDFDQFTGATITPRAVIKAVRNTVNYVNQSRDEILSQPLNCAGDNQ.

A helical membrane pass occupies residues 9–29 (GLTLAIFACATTGLVALTQYL). Thr175 is modified (FMN phosphoryl threonine).

It belongs to the RnfG family. The complex is composed of six subunits: RnfA, RnfB, RnfC, RnfD, RnfE and RnfG. FMN serves as cofactor.

The protein localises to the cell inner membrane. In terms of biological role, part of a membrane-bound complex that couples electron transfer with translocation of ions across the membrane. This chain is Ion-translocating oxidoreductase complex subunit G, found in Vibrio parahaemolyticus serotype O3:K6 (strain RIMD 2210633).